A 193-amino-acid polypeptide reads, in one-letter code: Ion-translocating oxidoreductase complex subunit B (193 aa).

The tract at residues 1–23 (MTFLFIVITLLALIFGAILGFAS) is hydrophobic. Positions 29–87 (EADPVVEKIDAILPQSQCGQCGYPGCKPYAEAICNGDEITKCIPGGQTTIVKIAEILGV) constitute a 4Fe-4S domain. Positions 46, 49, 54, 70, 110, 113, 116, 120, 140, 143, 146, and 150 each coordinate [4Fe-4S] cluster. 4Fe-4S ferredoxin-type domains lie at 101–130 (KVAF…GTNK) and 131–160 (AMHT…MIPV).

The protein belongs to the 4Fe4S bacterial-type ferredoxin family. RnfB subfamily. The complex is composed of six subunits: RnfA, RnfB, RnfC, RnfD, RnfE and RnfG. [4Fe-4S] cluster serves as cofactor.

It is found in the cell inner membrane. Functionally, part of a membrane-bound complex that couples electron transfer with translocation of ions across the membrane. The polypeptide is Ion-translocating oxidoreductase complex subunit B (Haemophilus influenzae (strain 86-028NP)).